An 83-amino-acid polypeptide reads, in one-letter code: Exodeoxyribonuclease 7 small subunit (83 aa).

Belongs to the XseB family. Heterooligomer composed of large and small subunits.

It is found in the cytoplasm. The catalysed reaction is Exonucleolytic cleavage in either 5'- to 3'- or 3'- to 5'-direction to yield nucleoside 5'-phosphates.. Its function is as follows. Bidirectionally degrades single-stranded DNA into large acid-insoluble oligonucleotides, which are then degraded further into small acid-soluble oligonucleotides. The sequence is that of Exodeoxyribonuclease 7 small subunit from Nitrobacter hamburgensis (strain DSM 10229 / NCIMB 13809 / X14).